The primary structure comprises 317 residues: Probable cell division protein WhiA (317 aa).

The segment at residues 276 to 310 (TLKELGEMVSGGKISKSGINHRLRKIDDIAEKLRA) is a DNA-binding region (H-T-H motif).

Belongs to the WhiA family.

Its function is as follows. Involved in cell division and chromosome segregation. The polypeptide is Probable cell division protein WhiA (Bacillus thuringiensis (strain Al Hakam)).